The primary structure comprises 143 residues: FAD synthase (143 aa).

ATP-binding positions include 11–12 (TF), 16–19 (HPGH), and aspartate 94.

Belongs to the archaeal FAD synthase family. Homodimer. It depends on a divalent metal cation as a cofactor.

The enzyme catalyses FMN + ATP + H(+) = FAD + diphosphate. It participates in cofactor biosynthesis; FAD biosynthesis; FAD from FMN: step 1/1. Its function is as follows. Catalyzes the transfer of the AMP portion of ATP to flavin mononucleotide (FMN) to produce flavin adenine dinucleotide (FAD) coenzyme. The chain is FAD synthase from Halomicrobium mukohataei (strain ATCC 700874 / DSM 12286 / JCM 9738 / NCIMB 13541) (Haloarcula mukohataei).